Consider the following 171-residue polypeptide: Translationally-controlled tumor protein homolog (171 aa).

Residues 1 to 171 form the TCTP domain; that stretch reads MIIYKDIITG…FKDGLEIEKC (171 aa).

The protein belongs to the TCTP family.

The protein resides in the cytoplasm. Its function is as follows. Involved in calcium binding and microtubule stabilization. This chain is Translationally-controlled tumor protein homolog (tpt1), found in Labeo rohita (Indian major carp).